Here is a 700-residue protein sequence, read N- to C-terminus: Elongation factor G 2 (700 aa).

The tr-type G domain maps to 8-290; the sequence is ERYRNIGISA…AVLDFLPSPI (283 aa). Residues 17 to 24, 88 to 92, and 142 to 145 each bind GTP; these read AHIDAGKT, DTPGH, and NKMD.

This sequence belongs to the TRAFAC class translation factor GTPase superfamily. Classic translation factor GTPase family. EF-G/EF-2 subfamily.

The protein resides in the cytoplasm. Functionally, catalyzes the GTP-dependent ribosomal translocation step during translation elongation. During this step, the ribosome changes from the pre-translocational (PRE) to the post-translocational (POST) state as the newly formed A-site-bound peptidyl-tRNA and P-site-bound deacylated tRNA move to the P and E sites, respectively. Catalyzes the coordinated movement of the two tRNA molecules, the mRNA and conformational changes in the ribosome. The polypeptide is Elongation factor G 2 (Paraburkholderia xenovorans (strain LB400)).